Here is a 146-residue protein sequence, read N- to C-terminus: Large ribosomal subunit protein uL15 (146 aa).

Over residues 1–13 the composition is skewed to basic and acidic residues; that stretch reads MKLHELKPAEGSR. A disordered region spans residues 1–51; the sequence is MKLHELKPAEGSRKVRNRVGRGIGSGNGKTAGRGHKGQNARSGGGVRLGFE. Composition is skewed to gly residues over residues 21 to 31 and 42 to 51; these read RGIGSGNGKTA and SGGGVRLGFE.

This sequence belongs to the universal ribosomal protein uL15 family. As to quaternary structure, part of the 50S ribosomal subunit.

Its function is as follows. Binds to the 23S rRNA. The protein is Large ribosomal subunit protein uL15 of Bacillus mycoides (strain KBAB4) (Bacillus weihenstephanensis).